A 376-amino-acid chain; its full sequence is 23S rRNA (uracil(747)-C(5))-methyltransferase RlmC (376 aa).

Positions 3, 11, 14, and 87 each coordinate [4Fe-4S] cluster. S-adenosyl-L-methionine is bound by residues Gln212, Phe241, Glu262, and Asn307. Cys334 acts as the Nucleophile in catalysis.

Belongs to the class I-like SAM-binding methyltransferase superfamily. RNA M5U methyltransferase family. RlmC subfamily.

It carries out the reaction uridine(747) in 23S rRNA + S-adenosyl-L-methionine = 5-methyluridine(747) in 23S rRNA + S-adenosyl-L-homocysteine + H(+). In terms of biological role, catalyzes the formation of 5-methyl-uridine at position 747 (m5U747) in 23S rRNA. The sequence is that of 23S rRNA (uracil(747)-C(5))-methyltransferase RlmC from Citrobacter koseri (strain ATCC BAA-895 / CDC 4225-83 / SGSC4696).